The sequence spans 571 residues: Glutamine--tRNA ligase (571 aa).

A 'HIGH' region motif is present at residues 35 to 45 (PEPNGYLHIGH). Residues 36–38 (EPN) and 42–48 (HIGHAKS) contribute to the ATP site. L-glutamine is bound by residues Asp68 and Tyr213. Residues Thr232, 262 to 263 (RL), and 270 to 272 (LSK) each bind ATP. A 'KMSKS' region motif is present at residues 269–273 (ILSKR).

It belongs to the class-I aminoacyl-tRNA synthetase family. Monomer.

The protein localises to the cytoplasm. The enzyme catalyses tRNA(Gln) + L-glutamine + ATP = L-glutaminyl-tRNA(Gln) + AMP + diphosphate. This Buchnera aphidicola subsp. Acyrthosiphon pisum (strain Tuc7) protein is Glutamine--tRNA ligase.